Here is a 78-residue protein sequence, read N- to C-terminus: Exodeoxyribonuclease 7 small subunit (78 aa).

The protein belongs to the XseB family. Heterooligomer composed of large and small subunits.

It is found in the cytoplasm. The catalysed reaction is Exonucleolytic cleavage in either 5'- to 3'- or 3'- to 5'-direction to yield nucleoside 5'-phosphates.. Its function is as follows. Bidirectionally degrades single-stranded DNA into large acid-insoluble oligonucleotides, which are then degraded further into small acid-soluble oligonucleotides. The sequence is that of Exodeoxyribonuclease 7 small subunit from Psychromonas ingrahamii (strain DSM 17664 / CCUG 51855 / 37).